We begin with the raw amino-acid sequence, 133 residues long: Small ribosomal subunit protein uS9 (133 aa).

Residues glycine 95–lysine 113 are compositionally biased toward basic and acidic residues. The interval glycine 95–arginine 133 is disordered. Residues lysine 114–arginine 133 show a composition bias toward basic residues.

It belongs to the universal ribosomal protein uS9 family.

This chain is Small ribosomal subunit protein uS9, found in Chlamydia felis (strain Fe/C-56) (Chlamydophila felis).